Reading from the N-terminus, the 451-residue chain is Phosphoglucosamine mutase (451 aa).

The active-site Phosphoserine intermediate is Ser-102. 4 residues coordinate Mg(2+): Ser-102, Asp-243, Asp-245, and Asp-247. A Phosphoserine modification is found at Ser-102.

Belongs to the phosphohexose mutase family. Mg(2+) serves as cofactor. Activated by phosphorylation.

It catalyses the reaction alpha-D-glucosamine 1-phosphate = D-glucosamine 6-phosphate. In terms of biological role, catalyzes the conversion of glucosamine-6-phosphate to glucosamine-1-phosphate. This is Phosphoglucosamine mutase from Brucella abortus (strain 2308).